Reading from the N-terminus, the 582-residue chain is ATP-dependent lipid A-core flippase (582 aa).

Helical transmembrane passes span 16–36 (LWPMISPFKAGLAVAAIALII), 63–83 (VLLWMPLVVIGLMLVRGASGF), 153–173 (IIGLFILMFYYSWQLSIILIV), 253–273 (PIIQLIASLALAFVLYAASFP), and 275–295 (VMETLTAGTITVVFSSMIALM). The ABC transmembrane type-1 domain occupies 28-310 (AVAAIALIIN…LTNVNAQFQR (283 aa)). In terms of domain architecture, ABC transporter spans 342–578 (LEFRQVNFAY…NGAYAQLHRM (237 aa)). An ATP-binding site is contributed by 376–383 (GRSGSGKS).

The protein belongs to the ABC transporter superfamily. Lipid exporter (TC 3.A.1.106) family. Homodimer.

It is found in the cell inner membrane. It catalyses the reaction ATP + H2O + lipid A-core oligosaccharideSide 1 = ADP + phosphate + lipid A-core oligosaccharideSide 2.. In terms of biological role, involved in lipopolysaccharide (LPS) biosynthesis. Translocates lipid A-core from the inner to the outer leaflet of the inner membrane. Transmembrane domains (TMD) form a pore in the inner membrane and the ATP-binding domain (NBD) is responsible for energy generation. In Pectobacterium atrosepticum (strain SCRI 1043 / ATCC BAA-672) (Erwinia carotovora subsp. atroseptica), this protein is ATP-dependent lipid A-core flippase.